The following is a 381-amino-acid chain: Spermidine/putrescine import ATP-binding protein PotA (381 aa).

The region spanning 22-252 (VELRNVFKFF…PKTSFVADFI (231 aa)) is the ABC transporter domain. 54 to 61 (GPSGCGKT) lines the ATP pocket.

Belongs to the ABC transporter superfamily. Spermidine/putrescine importer (TC 3.A.1.11.1) family. As to quaternary structure, the complex is composed of two ATP-binding proteins (PotA), two transmembrane proteins (PotB and PotC) and a solute-binding protein (PotD).

The protein localises to the cell inner membrane. It carries out the reaction ATP + H2O + polyamine-[polyamine-binding protein]Side 1 = ADP + phosphate + polyamineSide 2 + [polyamine-binding protein]Side 1.. In terms of biological role, part of the ABC transporter complex PotABCD involved in spermidine/putrescine import. Responsible for energy coupling to the transport system. The protein is Spermidine/putrescine import ATP-binding protein PotA of Nostoc sp. (strain PCC 7120 / SAG 25.82 / UTEX 2576).